The chain runs to 209 residues: Holliday junction branch migration complex subunit RuvA (209 aa).

Positions 1–64 are domain I; sequence MIGRIRGMLI…EDAQSLYGFA (64 aa). The interval 65 to 143 is domain II; that stretch reads SRLDRNLFRL…QLEGQFVPSQ (79 aa). The flexible linker stretch occupies residues 144 to 157; the sequence is PDVPTGAGAATASQ. The tract at residues 158–209 is domain III; sequence AGPDPREEAEAALIALGYKPQEAAKAISKVAGPDMNSETLIRLALKNMIPAG.

The protein belongs to the RuvA family. As to quaternary structure, homotetramer. Forms an RuvA(8)-RuvB(12)-Holliday junction (HJ) complex. HJ DNA is sandwiched between 2 RuvA tetramers; dsDNA enters through RuvA and exits via RuvB. An RuvB hexamer assembles on each DNA strand where it exits the tetramer. Each RuvB hexamer is contacted by two RuvA subunits (via domain III) on 2 adjacent RuvB subunits; this complex drives branch migration. In the full resolvosome a probable DNA-RuvA(4)-RuvB(12)-RuvC(2) complex forms which resolves the HJ.

It is found in the cytoplasm. The RuvA-RuvB-RuvC complex processes Holliday junction (HJ) DNA during genetic recombination and DNA repair, while the RuvA-RuvB complex plays an important role in the rescue of blocked DNA replication forks via replication fork reversal (RFR). RuvA specifically binds to HJ cruciform DNA, conferring on it an open structure. The RuvB hexamer acts as an ATP-dependent pump, pulling dsDNA into and through the RuvAB complex. HJ branch migration allows RuvC to scan DNA until it finds its consensus sequence, where it cleaves and resolves the cruciform DNA. This Marinobacter nauticus (strain ATCC 700491 / DSM 11845 / VT8) (Marinobacter aquaeolei) protein is Holliday junction branch migration complex subunit RuvA.